Consider the following 671-residue polypeptide: DNA ligase (671 aa).

Residues 31–35 (DAEYD), 80–81 (SL), and E110 each bind NAD(+). K112 (N6-AMP-lysine intermediate) is an active-site residue. Residues R133, E167, K283, and K307 each contribute to the NAD(+) site. Residues C401, C404, C419, and C424 each coordinate Zn(2+). One can recognise a BRCT domain in the interval 587–671 (EEELVFAGKT…YLPDEGGLNE (85 aa)).

It belongs to the NAD-dependent DNA ligase family. LigA subfamily. Mg(2+) is required as a cofactor. Mn(2+) serves as cofactor.

The catalysed reaction is NAD(+) + (deoxyribonucleotide)n-3'-hydroxyl + 5'-phospho-(deoxyribonucleotide)m = (deoxyribonucleotide)n+m + AMP + beta-nicotinamide D-nucleotide.. Its function is as follows. DNA ligase that catalyzes the formation of phosphodiester linkages between 5'-phosphoryl and 3'-hydroxyl groups in double-stranded DNA using NAD as a coenzyme and as the energy source for the reaction. It is essential for DNA replication and repair of damaged DNA. The chain is DNA ligase from Listeria monocytogenes serotype 4a (strain HCC23).